The chain runs to 1583 residues: Transcriptional activator GLI3 (1583 aa).

The residue at position 1 (Met1) is an N-acetylmethionine. 2 stretches are compositionally biased toward polar residues: residues 1–10 (MEAQAHSSTA) and 58–78 (ITMQPQSVQGLNKISEEPSTS). Residues 1–78 (MEAQAHSSTA…NKISEEPSTS (78 aa)) form a disordered region. Omega-N-methylarginine is present on Arg175. Residues 368-475 (QSLGSAFGHS…DKDESKQEPE (108 aa)) form a disordered region. Positions 403–421 (VQVSSGPSESSQSKPTSES) are enriched in low complexity. Lys438 participates in a covalent cross-link: Glycyl lysine isopeptide (Lys-Gly) (interchain with G-Cter in SUMO2). The span at 448-457 (SRGQQEQPEG) shows a compositional bias: polar residues. A compositionally biased stretch (basic and acidic residues) spans 461-474 (VKEEADKDESKQEP). A Glycyl lysine isopeptide (Lys-Gly) (interchain with G-Cter in SUMO2) cross-link involves residue Lys462. C2H2-type zinc fingers lie at residues 480–505 (TNCHWEGCTREFDTQDQLVHHINNDH), 513–540 (FVCRWLDCSREQKPFKAQYMLVVHMRRH), 546–570 (HKCTFEGCTKAYSRLENLKTHLRSH), 576–601 (YVCEHEGCNKAFSNASDRAKHQNRTH), and 607–632 (YVCKIPGCTKRYTDPSSLRKHVKTVH). Residues 620–728 (DPSSLRKHVK…PISNYSNSGL (109 aa)) form a disordered region. The segment covering 632–648 (HGPEAHVTKKQRGDMHP) has biased composition (basic and acidic residues). Ser664 is subject to Phosphoserine. Residues 684 to 699 (SKREECLQVKTVKAEK) show a composition bias toward basic and acidic residues. A compositionally biased stretch (low complexity) spans 703 to 726 (SQPSPGGQSSCSSQQSPISNYSNS). A mediates interaction with DZIP1 region spans residues 745-845 (DETPIMDSTI…VDFTVLNTLN (101 aa)). A Glycyl lysine isopeptide (Lys-Gly) (interchain with G-Cter in ubiquitin) cross-link involves residue Lys773. Lys779 is covalently cross-linked (Glycyl lysine isopeptide (Lys-Gly) (interchain with G-Cter in SUMO2); alternate). A Glycyl lysine isopeptide (Lys-Gly) (interchain with G-Cter in ubiquitin); alternate cross-link involves residue Lys779. Residues Lys784 and Lys800 each participate in a glycyl lysine isopeptide (Lys-Gly) (interchain with G-Cter in ubiquitin) cross-link. Positions 809–828 (GNGTQSNNNYSSGGPGTLLP) are disordered. Positions 810–820 (NGTQSNNNYSS) are enriched in polar residues. Residues Ser849, Ser865, Ser877, Ser907, Ser980, and Ser1006 each carry the phosphoserine; by PKA modification. Residues 863 to 880 (RSSGISPCFSSRRSSEAS) show a composition bias toward low complexity. Positions 863–918 (RSSGISPCFSSRRSSEASQAEGRPQNVSVADSYDPISTDASRRSSEASQGDGLPSL) are disordered. The tract at residues 1164 to 1189 (EVSSGTSDLSSSKLKCGQQRPSAQQP) is disordered. Residues 1166–1175 (SSGTSDLSSS) are compositionally biased toward low complexity.

It belongs to the GLI C2H2-type zinc-finger protein family. The phosphorylated form interacts with BTRC. The full-length GLI3 form (GLI3FL) interacts with SUFU and this interaction regulates the formation of either repressor or activator forms of GLI3. Its association with SUFU is regulated by Hh signaling and dissociation of the SUFU-GLI3 interaction requires the presence of the ciliary motor KIF3A. Interacts with KIF7. The activator form of GLI3 (GLI3A) but not the repressor form (GLI3R) can interact with TRPS1. Interacts with ZIC1. Interacts with ZIC3 (via C2H2-type domains 3, 4 and 5); the interaction enhances its transcriptional activity. Interacts with WRD11; the interaction associates EMX1 with GLI3. Interacts with DZIP1; retains GLI3 within the cytoplasm. Phosphorylated by DYRK2 (in vitro). Phosphorylated on multiple sites by protein kinase A (PKA) and phosphorylation by PKA primes further phosphorylation by CK1 and GSK3. Phosphorylation is essential for its proteolytic processing. Post-translationally, transcriptional repressor GLI3R, a C-terminally truncated form, is generated from the full-length GLI3 protein (GLI3FL/GLI3-190) through proteolytic processing. This process requires PKA-primed phosphorylation of GLI3, ubiquitination of GLI3 and the presence of BTRC. GLI3FL is complexed with SUFU in the cytoplasm and is maintained in a neutral state. Without the Hh signal, the SUFU-GLI3 complex is recruited to cilia, leading to the efficient processing of GLI3FL into GLI3R. GLI3R formation leads to its dissociation from SUFU, allowing it to translocate into the nucleus, and repress Hh target genes. When Hh signaling is initiated, SUFU dissociates from GLI3FL and this has two consequences. First, GLI3R production is halted. Second, free GLI3FL translocates to the nucleus, where it is phosphorylated, destabilized, and converted to a transcriptional activator (GLI3A). Phosphorylated in vitro by ULK3.

The protein localises to the nucleus. It is found in the cytoplasm. Its subcellular location is the cell projection. It localises to the cilium. Has a dual function as a transcriptional activator and a repressor of the sonic hedgehog (Shh) pathway, and plays a role in limb development. The full-length GLI3 form (GLI3FL) after phosphorylation and nuclear translocation, acts as an activator (GLI3A) while GLI3R, its C-terminally truncated form, acts as a repressor. A proper balance between the GLI3 activator and the repressor GLI3R, rather than the repressor gradient itself or the activator/repressor ratio gradient, specifies limb digit number and identity. In concert with TRPS1, plays a role in regulating the size of the zone of distal chondrocytes, in restricting the zone of PTHLH expression in distal cells and in activating chondrocyte proliferation. Binds to the minimal GLI-consensus sequence 5'-GGGTGGTC-3'. This is Transcriptional activator GLI3 (Gli3) from Mus musculus (Mouse).